A 409-amino-acid chain; its full sequence is F-box protein At3g17320 (409 aa).

The region spanning Met1–Leu47 is the F-box domain.

The sequence is that of F-box protein At3g17320 from Arabidopsis thaliana (Mouse-ear cress).